The following is a 963-amino-acid chain: Exportin-T (963 aa).

An N-acetylmethionine modification is found at methionine 1. At lysine 635 the chain carries N6-acetyllysine.

Belongs to the exportin family. As to quaternary structure, found in a complex with XPOT, Ran and tRNA. Probably found in a complex with nucleoporins. Interacts with Ran and tRNA in a GTP-dependent manner.

It is found in the nucleus. The protein localises to the cytoplasm. Functionally, mediates the nuclear export of aminoacylated tRNAs. In the nucleus binds to tRNA and to the GTPase Ran in its active GTP-bound form. Docking of this trimeric complex to the nuclear pore complex (NPC) is mediated through binding to nucleoporins. Upon transit of a nuclear export complex into the cytoplasm, disassembling of the complex and hydrolysis of Ran-GTP to Ran-GDP (induced by RANBP1 and RANGAP1, respectively) cause release of the tRNA from the export receptor. XPOT then return to the nuclear compartment and mediate another round of transport. The directionality of nuclear export is thought to be conferred by an asymmetric distribution of the GTP- and GDP-bound forms of Ran between the cytoplasm and nucleus. The protein is Exportin-T (Xpot) of Mus musculus (Mouse).